Here is a 424-residue protein sequence, read N- to C-terminus: CinA-like protein (424 aa).

Belongs to the CinA family.

The sequence is that of CinA-like protein from Shewanella putrefaciens (strain CN-32 / ATCC BAA-453).